The chain runs to 540 residues: MVLRLPDPSHGGGAPPHDHTEDEWFKERYGGGGGGGDAPRSSRAVNPVPPYGRRSALAPRRKEDFGDGGAFPEVHVAQYPLDMGRRGGDGDGEQRGSSGGVLSLTVDGSGGRVEFDAVVRQGENAGKTVYSSPGDVLPKINAAAADADDDEQAAVEETTARTSAALRAIVEKRLSAVQPSNTLASNHDPEFIKYTPARQTSAFNSGAAERIIRMGETQQDPLEPPKFKHKRVPAPAGSPPVPVLRSPPRPPSQKDHDDWKVPPSISSWKNPKGYSIPLDKRAALDGRGLHDVQVSDAFAALAEALYAAEQKAREAVETRAKVHTEMKMREKEKAEQHLLQLATKARAEMLGAAPPAPSERSKAAAERDAIREERRRERRLEARAAAAAASKKSAATRDRDRDVSERIALGMANTGGGGGEVTYDQRLFNQEKGMGSGFAGDDQYNVYSGRLFAAQPALSTLYKPSKHGEEDPDAYGDADEHLGKIAKTRRFVPDKAFTGAPASVAAGKRERPVEFDGPEMEEDPFHLDQFLTQMKKGKHQ.

Disordered stretches follow at residues 1-106 (MVLR…SLTV), 215-273 (GETQ…NPKG), 351-402 (GAAP…RDRD), and 502-526 (ASVA…DPFH). Composition is skewed to basic and acidic residues over residues 16-29 (PHDH…KERY) and 83-94 (MGRRGGDGDGEQ). The SNW stretch occupies residues 189–353 (PEFIKYTPAR…KARAEMLGAA (165 aa)). Pro residues predominate over residues 236–251 (AGSPPVPVLRSPPRPP). A compositionally biased stretch (basic and acidic residues) spans 359–382 (ERSKAAAERDAIREERRRERRLEA). The span at 383 to 393 (RAAAAAASKKS) shows a compositional bias: low complexity.

The protein belongs to the SNW family.

The protein resides in the nucleus. This is SNW/SKI-interacting protein B from Oryza sativa subsp. japonica (Rice).